Consider the following 662-residue polypeptide: Neurexin-2-beta (662 aa).

A compositionally biased stretch (gly residues) spans 1 to 10; the sequence is MPPGGSGQGG. The interval 1 to 27 is disordered; it reads MPPGGSGQGGCPRRPPALAGPLPPPPP. The signal sequence occupies residues 1 to 46; the sequence is MPPGGSGQGGCPRRPPALAGPLPPPPPPPPLPLLLGLLLLLGAAEG. Over 47 to 586 the chain is Extracellular; it reads ARVSSSLSTT…EVIRESSSTT (540 aa). The Laminin G-like domain maps to 87–295; sequence TTYIFGKGGA…HLRLVGEGPS (209 aa). Ca(2+)-binding residues include D139 and V156. Residue N186 is glycosylated (N-linked (GlcNAc...) asparagine). Ca(2+) is bound by residues I238 and N240. The O-linked (Xyl...) (heparan sulfate) serine glycan is linked to S350. Disordered stretches follow at residues 408-458, 476-496, and 530-557; these read ATQD…LPPT, LLSP…ATGA, and LGPG…PGFP. The chain crosses the membrane as a helical span at residues 587 to 607; the sequence is GMVVGIVAAAALCILILLYAM. Topologically, residues 608–662 are cytoplasmic; it reads YKYRNRDEGSYQVDQSRNYISNSAQSNGAVVKEKAPAAPKTPSKAKKNKDKEYYV. The segment at 629–662 is disordered; it reads NSAQSNGAVVKEKAPAAPKTPSKAKKNKDKEYYV.

Belongs to the neurexin family. As to quaternary structure, interacts (via cytoplasmic C-terminal region) with CASK. Isoform Beta 4b binds alpha-dystroglycan and neuroligins NLGN1, NLGN2 and NLGN3. Interacts with CBLN1, CBLN2 and, less avidly, with CBLN4. Interacts with CLSTN3. O-glycosylated; contains heparan sulfate. Heparan sulfate attachment is required for synapse development by mediating interactions with neuroligins. In terms of tissue distribution, brain (neuronal synapse).

The protein resides in the presynaptic cell membrane. Functionally, neuronal cell surface protein that may be involved in cell recognition and cell adhesion. This is Neurexin-2-beta (Nrxn2) from Rattus norvegicus (Rat).